The following is a 183-amino-acid chain: Protein US32 (183 aa).

This sequence belongs to the herpesviridae US1 family.

The chain is Protein US32 (US32) from Homo sapiens (Human).